Here is a 1183-residue protein sequence, read N- to C-terminus: PAN2-PAN3 deadenylation complex catalytic subunit PAN2 (1183 aa).

WD repeat units follow at residues 150–189 and 289–328; these read SIEN…KAAQ and DVSS…ENAA. The tract at residues 331–478 is linker; it reads ENGSIVLPPF…EEIEEELNDG (148 aa). A disordered region spans residues 439 to 470; the sequence is AEGRARGKGRRDSGPRFRSEKDKKGTYKDKEE. Over residues 448-469 the composition is skewed to basic and acidic residues; it reads RRDSGPRFRSEKDKKGTYKDKE. The USP domain maps to 479 to 864; sequence EVPKYYRKVE…VPAVIILERE (386 aa). The 170-residue stretch at 916 to 1085 folds into the Exonuclease domain; sequence VAIDAEFVAL…HDSIEDAHFA (170 aa). A divalent metal cation-binding residues include aspartate 919, glutamate 921, aspartate 1028, and aspartate 1081. Residues 1155-1183 form a disordered region; it reads KSRMATPPPPTKLGLPQWASQNSPSPLRR. Over residues 1172-1183 the composition is skewed to polar residues; the sequence is WASQNSPSPLRR.

The protein belongs to the peptidase C19 family. PAN2 subfamily. As to quaternary structure, forms a heterotrimer with an asymmetric homodimer of the regulatory subunit PAN3 to form the poly(A)-nuclease (PAN) deadenylation complex. A divalent metal cation is required as a cofactor.

The protein localises to the cytoplasm. The enzyme catalyses Exonucleolytic cleavage of poly(A) to 5'-AMP.. Its activity is regulated as follows. Positively regulated by the regulatory subunit PAN3. In terms of biological role, catalytic subunit of the poly(A)-nuclease (PAN) deadenylation complex, one of two cytoplasmic mRNA deadenylases involved in mRNA turnover. PAN specifically shortens poly(A) tails of RNA and the activity is stimulated by poly(A)-binding protein PAB1. PAN deadenylation is followed by rapid degradation of the shortened mRNA tails by the CCR4-NOT complex. Deadenylated mRNAs are then degraded by two alternative mechanisms, namely exosome-mediated 3'-5' exonucleolytic degradation, or deadenylation-dependent mRNA decaping and subsequent 5'-3' exonucleolytic degradation by XRN1. May also be involved in post-transcriptional maturation of mRNA poly(A) tails. This chain is PAN2-PAN3 deadenylation complex catalytic subunit PAN2, found in Cryptococcus neoformans var. neoformans serotype D (strain B-3501A) (Filobasidiella neoformans).